Reading from the N-terminus, the 250-residue chain is Probable transcriptional regulatory protein SACE_2018 (250 aa).

It belongs to the TACO1 family.

The protein resides in the cytoplasm. This Saccharopolyspora erythraea (strain ATCC 11635 / DSM 40517 / JCM 4748 / NBRC 13426 / NCIMB 8594 / NRRL 2338) protein is Probable transcriptional regulatory protein SACE_2018.